The chain runs to 1192 residues: Leucine-rich repeat receptor protein kinase EMS1 (1192 aa).

A signal peptide spans 1–18 (MAFLTALFLFLFFSFSSS). N-linked (GlcNAc...) asparagine glycosylation occurs at Asn47. 28 LRR repeats span residues 64–87 (LGRV…EISS), 90–112 (NLRE…IWNL), 114–137 (HLQT…SELP), 138–160 (QLLY…FFIS), 163–185 (ALSS…IGKL), 187–209 (NLSN…IGNI), 235–257 (HLAK…FGEL), 259–281 (NLSI…LGNC), 283–304 (SLKS…ELSE), 330–352 (VLDS…IEDC), 354–376 (MLKH…LCGS), 378–400 (SLEA…FDGC), 402–425 (SLGE…WKLP), 426–447 (LMAL…LWKS), 449–471 (NLME…IGNA), 473–496 (SLKR…GKLT), 497–520 (SLSV…GDCT), 521–543 (SLTT…ITAL), 545–567 (QLQC…PSAY), 581–603 (HHGI…LGEC), 605–628 (VLVE…SRLT), 629–651 (NLTI…MGNS), 653–675 (KLQG…FGLL), 677–697 (SLVK…ASLG), 701–723 (ELTH…LSTM), 725–748 (KLVG…GNLT), 749–772 (QLEY…CGLP), and 773–795 (NLEF…GVCQ). Residues Asn171, Asn187, and Asn208 are each glycosylated (N-linked (GlcNAc...) asparagine). Asn259 carries N-linked (GlcNAc...) asparagine glycosylation. Asn414 and Asn435 each carry an N-linked (GlcNAc...) asparagine glycan. An N-linked (GlcNAc...) asparagine glycan is attached at Asn555. Asn629 is a glycosylation site (N-linked (GlcNAc...) asparagine). N-linked (GlcNAc...) asparagine glycans are attached at residues Asn682, Asn711, and Asn746. Residues 828–848 (WGIAGLMLGFTIIVFVFVFSL) traverse the membrane as a helical segment. Position 914 is a phosphothreonine (Thr914). In terms of domain architecture, Protein kinase spans 917–1192 (FSKKNIIGDG…LDVLKALKEI (276 aa)). Residues 923–931 (IGDGGFGTV) and Lys945 each bind ATP. At Tyr990 the chain carries Phosphotyrosine. Asp1043 serves as the catalytic Proton acceptor. Residue Tyr1085 is modified to Phosphotyrosine.

Belongs to the protein kinase superfamily. Ser/Thr protein kinase family. As to quaternary structure, interacts with TPD1. In terms of processing, autophosphorylates in vitro. As to expression, present in young buds, open flowers and siliques but absent from mature leaves and roots. Strongly expressed in the young organ primordia, and as the anthers and ovules developed, became focused in the microsporangia and in the distal and chalazal regions of the ovule. In cv. Landsberg erecta, only expressed in the anthers of young floral buds.

Its subcellular location is the cell membrane. The enzyme catalyses L-seryl-[protein] + ATP = O-phospho-L-seryl-[protein] + ADP + H(+). It catalyses the reaction L-threonyl-[protein] + ATP = O-phospho-L-threonyl-[protein] + ADP + H(+). Receptor with a serine/threonine-protein kinase activity required for the specification of the correct number of male archesporial initials and for the subsequent specification of tapetal and middle cell layer identities. In seeds, required for enhancing cell size and the rate of embryonic development. In Arabidopsis thaliana (Mouse-ear cress), this protein is Leucine-rich repeat receptor protein kinase EMS1.